A 354-amino-acid polypeptide reads, in one-letter code: Protein RecA (354 aa).

65-72 (GPESSGKT) provides a ligand contact to ATP.

Belongs to the RecA family.

The protein resides in the cytoplasm. Can catalyze the hydrolysis of ATP in the presence of single-stranded DNA, the ATP-dependent uptake of single-stranded DNA by duplex DNA, and the ATP-dependent hybridization of homologous single-stranded DNAs. It interacts with LexA causing its activation and leading to its autocatalytic cleavage. The chain is Protein RecA from Pseudomonas savastanoi pv. phaseolicola (strain 1448A / Race 6) (Pseudomonas syringae pv. phaseolicola (strain 1448A / Race 6)).